The primary structure comprises 265 residues: Putative Tubby-like protein 4 (265 aa).

Positions 1-44 (MPPELLRDVLMRIERSEDTWPSRKNVVSCVGVCKNWRQIFKEIV) constitute an F-box domain. The FBD domain maps to 228 to 250 (SYELKLALYFAKNSAILKKFVLR).

It belongs to the TUB family.

The chain is Putative Tubby-like protein 4 from Arabidopsis thaliana (Mouse-ear cress).